Consider the following 199-residue polypeptide: Small ribosomal subunit protein uS4 (199 aa).

The S4 RNA-binding domain occupies 94 to 157 (SRLDNLVYRA…RKLKLVQEAL (64 aa)).

The protein belongs to the universal ribosomal protein uS4 family. As to quaternary structure, part of the 30S ribosomal subunit. Contacts protein S5. The interaction surface between S4 and S5 is involved in control of translational fidelity.

Its function is as follows. One of the primary rRNA binding proteins, it binds directly to 16S rRNA where it nucleates assembly of the body of the 30S subunit. In terms of biological role, with S5 and S12 plays an important role in translational accuracy. The chain is Small ribosomal subunit protein uS4 from Mycoplasmopsis synoviae (strain 53) (Mycoplasma synoviae).